Here is a 150-residue protein sequence, read N- to C-terminus: Large ribosomal subunit protein bL9 (150 aa).

It belongs to the bacterial ribosomal protein bL9 family.

Functionally, binds to the 23S rRNA. The chain is Large ribosomal subunit protein bL9 from Neisseria meningitidis serogroup C (strain 053442).